Reading from the N-terminus, the 213-residue chain is Urease accessory protein UreG (213 aa).

A GTP-binding site is contributed by 12–19 (GPVGSGKT).

Belongs to the SIMIBI class G3E GTPase family. UreG subfamily. In terms of assembly, homodimer. UreD, UreF and UreG form a complex that acts as a GTP-hydrolysis-dependent molecular chaperone, activating the urease apoprotein by helping to assemble the nickel containing metallocenter of UreC. The UreE protein probably delivers the nickel.

The protein localises to the cytoplasm. Functionally, facilitates the functional incorporation of the urease nickel metallocenter. This process requires GTP hydrolysis, probably effectuated by UreG. The chain is Urease accessory protein UreG from Marinomonas sp. (strain MWYL1).